The following is a 501-amino-acid chain: Ribose import ATP-binding protein RbsA (501 aa).

2 ABC transporter domains span residues 5-241 (LQLK…VGRK) and 252-495 (APGD…VGKL). 37–44 (GENGAGKS) is a binding site for ATP.

It belongs to the ABC transporter superfamily. Ribose importer (TC 3.A.1.2.1) family. The complex is composed of an ATP-binding protein (RbsA), two transmembrane proteins (RbsC) and a solute-binding protein (RbsB).

It is found in the cell inner membrane. It carries out the reaction D-ribose(out) + ATP + H2O = D-ribose(in) + ADP + phosphate + H(+). Part of the ABC transporter complex RbsABC involved in ribose import. Responsible for energy coupling to the transport system. This Escherichia coli (strain UTI89 / UPEC) protein is Ribose import ATP-binding protein RbsA.